The primary structure comprises 164 residues: Lipoprotein signal peptidase (164 aa).

A run of 4 helical transmembrane segments spans residues 8–28 (IVAAVAALIADQASKLWLLFV), 39–59 (VTPFFDLVLAWNTGISYGWFQ), 64–84 (VGATILLAIKAGAVVLLAIWM), and 91–111 (LATIGLGLIIGGAIGNAIDRF). Catalysis depends on residues Asp-118 and Asp-140. The helical transmembrane segment at 131-151 (YSWYVFNLADVAIVAGVIALL) threads the bilayer.

It belongs to the peptidase A8 family.

It localises to the cell inner membrane. The enzyme catalyses Release of signal peptides from bacterial membrane prolipoproteins. Hydrolyzes -Xaa-Yaa-Zaa-|-(S,diacylglyceryl)Cys-, in which Xaa is hydrophobic (preferably Leu), and Yaa (Ala or Ser) and Zaa (Gly or Ala) have small, neutral side chains.. Its pathway is protein modification; lipoprotein biosynthesis (signal peptide cleavage). Functionally, this protein specifically catalyzes the removal of signal peptides from prolipoproteins. This Nitrobacter hamburgensis (strain DSM 10229 / NCIMB 13809 / X14) protein is Lipoprotein signal peptidase.